The primary structure comprises 331 residues: Heme A synthase (331 aa).

8 helical membrane passes run 6 to 26, 87 to 107, 124 to 144, 154 to 174, 193 to 213, 251 to 271, 279 to 299, and 301 to 321; these read VAIW…IGGF, YVHR…FIYF, ALLF…SGLV, LALH…QFFD, IWII…VAGL, VQFI…ILTI, LYVM…TLLL, and IPMA…GSGL. His255 serves as a coordination point for heme. Residue His309 coordinates heme.

Belongs to the COX15/CtaA family. Type 2 subfamily. In terms of assembly, interacts with CtaB. Heme b is required as a cofactor.

It is found in the cell membrane. It catalyses the reaction Fe(II)-heme o + 2 A + H2O = Fe(II)-heme a + 2 AH2. The protein operates within porphyrin-containing compound metabolism; heme A biosynthesis; heme A from heme O: step 1/1. In terms of biological role, catalyzes the conversion of heme O to heme A by two successive hydroxylations of the methyl group at C8. The first hydroxylation forms heme I, the second hydroxylation results in an unstable dihydroxymethyl group, which spontaneously dehydrates, resulting in the formyl group of heme A. This Wolbachia pipientis subsp. Culex pipiens (strain wPip) protein is Heme A synthase.